The chain runs to 559 residues: Urocanate hydratase (559 aa).

NAD(+) is bound by residues glycine 53–glycine 54, glutamine 131, glycine 177–glycine 179, glutamate 197, arginine 202, asparagine 243–alanine 244, glutamine 264–histidine 268, tyrosine 274–leucine 275, and tyrosine 323. The active site involves cysteine 411. NAD(+) is bound at residue glycine 493.

This sequence belongs to the urocanase family. NAD(+) is required as a cofactor.

It is found in the cytoplasm. It catalyses the reaction 4-imidazolone-5-propanoate = trans-urocanate + H2O. Its pathway is amino-acid degradation; L-histidine degradation into L-glutamate; N-formimidoyl-L-glutamate from L-histidine: step 2/3. Functionally, catalyzes the conversion of urocanate to 4-imidazolone-5-propionate. The sequence is that of Urocanate hydratase from Pseudomonas aeruginosa (strain LESB58).